Here is a 97-residue protein sequence, read N- to C-terminus: HssA/B-like protein 44 (97 aa).

Disordered regions lie at residues 1–22 and 62–97; these read MTLFSSISSISSSISSSKSSIA and ASTSSGGRGGRPGRGHGGPHGHGRGGSGSGSSCGCN. Over residues 72 to 84 the composition is skewed to basic residues; that stretch reads RPGRGHGGPHGHG. Residues 85–97 show a composition bias toward gly residues; that stretch reads RGGSGSGSSCGCN.

Belongs to the hssA/B family.

The chain is HssA/B-like protein 44 (hssl44) from Dictyostelium discoideum (Social amoeba).